We begin with the raw amino-acid sequence, 256 residues long: tRNA (guanine-N(7)-)-methyltransferase (256 aa).

The tract at residues 17-45 (TCETVPGLPQKKHYRQRAHSNPHSDHDIE) is disordered. Basic residues predominate over residues 26 to 36 (QKKHYRQRAHS). S-adenosyl-L-methionine is bound by residues glycine 74, 97–98 (EI), 132–133 (NA), and leucine 152. Residue aspartate 155 is part of the active site. 230-232 (TEE) is an S-adenosyl-L-methionine binding site.

It belongs to the class I-like SAM-binding methyltransferase superfamily. TrmB family.

The protein localises to the nucleus. It carries out the reaction guanosine(46) in tRNA + S-adenosyl-L-methionine = N(7)-methylguanosine(46) in tRNA + S-adenosyl-L-homocysteine. The protein operates within tRNA modification; N(7)-methylguanine-tRNA biosynthesis. Functionally, catalyzes the formation of N(7)-methylguanine at position 46 (m7G46) in tRNA. The sequence is that of tRNA (guanine-N(7)-)-methyltransferase from Caenorhabditis elegans.